The chain runs to 2287 residues: Protein Ycf2 (2287 aa).

1632-1639 (GSIGTGRS) lines the ATP pocket.

Belongs to the Ycf2 family.

It localises to the plastid. The protein localises to the chloroplast stroma. Its function is as follows. Probable ATPase of unknown function. Its presence in a non-photosynthetic plant (Epifagus virginiana) and experiments in tobacco indicate that it has an essential function which is probably not related to photosynthesis. The sequence is that of Protein Ycf2 from Calycanthus floridus var. glaucus (Eastern sweetshrub).